A 34-amino-acid polypeptide reads, in one-letter code: Mytilin-B (34 aa).

4 disulfide bridges follow: Cys-2-Cys-27, Cys-6-Cys-29, Cys-10-Cys-31, and Cys-15-Cys-34.

It is found in the secreted. Functionally, has antibacterial and antiviral activity. In Mytilus edulis (Blue mussel), this protein is Mytilin-B.